The primary structure comprises 278 residues: NH(3)-dependent NAD(+) synthetase (278 aa).

43–50 (GISGGVDS) is an ATP binding site. A Mg(2+)-binding site is contributed by Asp-49. Arg-146 is a deamido-NAD(+) binding site. Thr-166 lines the ATP pocket. Glu-171 lines the Mg(2+) pocket. Deamido-NAD(+) contacts are provided by Lys-179 and Asp-186. 2 residues coordinate ATP: Lys-195 and Thr-217. 266-267 (HK) provides a ligand contact to deamido-NAD(+).

The protein belongs to the NAD synthetase family. As to quaternary structure, homodimer.

The catalysed reaction is deamido-NAD(+) + NH4(+) + ATP = AMP + diphosphate + NAD(+) + H(+). It functions in the pathway cofactor biosynthesis; NAD(+) biosynthesis; NAD(+) from deamido-NAD(+) (ammonia route): step 1/1. Its function is as follows. Catalyzes the ATP-dependent amidation of deamido-NAD to form NAD. Uses ammonia as a nitrogen source. This chain is NH(3)-dependent NAD(+) synthetase, found in Pseudoalteromonas translucida (strain TAC 125).